A 560-amino-acid polypeptide reads, in one-letter code: Bifunctional NAD(P)H-hydrate repair enzyme (560 aa).

The interval 1-241 is NAD(P)H-hydrate epimerase; the sequence is MLSRLSERCS…WMTAPERMRA (241 aa). The YjeF N-terminal domain occupies 29–235; sequence LRDAEPAAAA…SLGLEDWMTA (207 aa). The NADPHX 1; for epimerase activity stretch occupies residues 77 to 81; the sequence is NNGGD. K(+)-binding residues include N78 and D145. Residues 149-155 form an NADPHX 1; for epimerase activity region; sequence GTGICGP. (6S)-NADPHX contacts are provided by Y160 and D178. Residue S181 participates in K(+) binding. The region spanning 249 to 547 is the YjeF C-terminal domain; it reads LDDVYEYFGI…HRVPLIVNAS (299 aa). Residues 249 to 560 are ADP-dependent (S)-NAD(P)H-hydrate dehydratase; the sequence is LDDVYEYFGI…PATRQRSSGP (312 aa). G351 is a (6S)-NADPHX binding site. The segment at 417–423 is NADPHX 2; for dehydratase activity; that stretch reads HPGEAAR. ADP contacts are provided by residues 454–458 and 475–484; these read KGPGT and NAGMASGGMG. (6S)-NADPHX is bound at residue D485.

This sequence in the N-terminal section; belongs to the NnrE/AIBP family. It in the C-terminal section; belongs to the NnrD/CARKD family. K(+) serves as cofactor.

It carries out the reaction (6S)-NADHX + ADP = AMP + phosphate + NADH + H(+). The catalysed reaction is (6S)-NADPHX + ADP = AMP + phosphate + NADPH + H(+). The enzyme catalyses (6R)-NADHX = (6S)-NADHX. It catalyses the reaction (6R)-NADPHX = (6S)-NADPHX. Bifunctional enzyme that catalyzes the epimerization of the S- and R-forms of NAD(P)HX and the dehydration of the S-form of NAD(P)HX at the expense of ADP, which is converted to AMP. This allows the repair of both epimers of NAD(P)HX, a damaged form of NAD(P)H that is a result of enzymatic or heat-dependent hydration. In Leishmania infantum, this protein is Bifunctional NAD(P)H-hydrate repair enzyme.